The chain runs to 81 residues: Elicitor peptide 4 (81 aa).

Positions 1–54 (MERGVSYYLWIPFKFIHQTFGSLLLKLLGLRSPSDHSFPEDGEEEVKVVEVSSR) are excised as a propeptide. The tract at residues 57 to 81 (PGKKNVLKKSRESSGKPGGTNKKPF) is disordered.

Belongs to the brassicaceae elicitor peptide family.

Functionally, elicitor of plant defense. This Arabidopsis thaliana (Mouse-ear cress) protein is Elicitor peptide 4 (PEP4).